The sequence spans 256 residues: MRRPVVMGNWKLNGSKTMVAELLTGLNAELEGVEGVDVAVAPPALYIDLAERLIAEGGNKIILGAQNTDINNSGAFTGDMSPAMLKDFGATHIIIGHSERREYHNESDEFVAKKFAFLKENGLKPVFCIGETEAQNEAGETEAVCARQINAVIDAYGVEALNGAIIAYEPIWAIGTGKAATAEDAQRIHASIRAMIAAKDAAVAEQVIIQYGGSVKPENAEAYFAQPDIDGALVGGASLDAKSFAAIAKAAAKMKA.

9 to 11 serves as a coordination point for substrate; that stretch reads NWK. The Electrophile role is filled by histidine 97. The active-site Proton acceptor is glutamate 169. Residues glycine 175, serine 214, and 235–236 contribute to the substrate site; that span reads GG.

It belongs to the triosephosphate isomerase family. As to quaternary structure, homodimer.

It localises to the cytoplasm. It carries out the reaction D-glyceraldehyde 3-phosphate = dihydroxyacetone phosphate. Its pathway is carbohydrate biosynthesis; gluconeogenesis. It participates in carbohydrate degradation; glycolysis; D-glyceraldehyde 3-phosphate from glycerone phosphate: step 1/1. Functionally, involved in the gluconeogenesis. Catalyzes stereospecifically the conversion of dihydroxyacetone phosphate (DHAP) to D-glyceraldehyde-3-phosphate (G3P). The chain is Triosephosphate isomerase from Vibrio vulnificus (strain CMCP6).